The following is a 101-amino-acid chain: Urease subunit beta (101 aa).

Belongs to the urease beta subunit family. As to quaternary structure, heterotrimer of UreA (gamma), UreB (beta) and UreC (alpha) subunits. Three heterotrimers associate to form the active enzyme.

The protein localises to the cytoplasm. It catalyses the reaction urea + 2 H2O + H(+) = hydrogencarbonate + 2 NH4(+). It functions in the pathway nitrogen metabolism; urea degradation; CO(2) and NH(3) from urea (urease route): step 1/1. The sequence is that of Urease subunit beta from Burkholderia orbicola (strain MC0-3).